A 64-amino-acid chain; its full sequence is Small ribosomal subunit protein bS21 (64 aa).

The protein belongs to the bacterial ribosomal protein bS21 family.

The polypeptide is Small ribosomal subunit protein bS21 (Anaeromyxobacter dehalogenans (strain 2CP-1 / ATCC BAA-258)).